Here is a 130-residue protein sequence, read N- to C-terminus: Glycine cleavage system H protein (130 aa).

One can recognise a Lipoyl-binding domain in the interval 24–106 (SVTVGITEHA…YGDGWIMRIQ (83 aa)). K65 is modified (N6-lipoyllysine).

Belongs to the GcvH family. The glycine cleavage system is composed of four proteins: P, T, L and H. (R)-lipoate is required as a cofactor.

The glycine cleavage system catalyzes the degradation of glycine. The H protein shuttles the methylamine group of glycine from the P protein to the T protein. In Halorhodospira halophila (strain DSM 244 / SL1) (Ectothiorhodospira halophila (strain DSM 244 / SL1)), this protein is Glycine cleavage system H protein.